The following is an 80-amino-acid chain: Putative UPF0377 protein YMR324C (80 aa).

A helical transmembrane segment spans residues 13 to 33; it reads ACIFIDSVCEGIVFWGLCLFV.

This sequence belongs to the UPF0377 family.

The protein localises to the membrane. This is Putative UPF0377 protein YMR324C from Saccharomyces cerevisiae (strain ATCC 204508 / S288c) (Baker's yeast).